Consider the following 268-residue polypeptide: Tryptophan synthase alpha chain (268 aa).

Active-site proton acceptor residues include Glu-49 and Asp-60.

This sequence belongs to the TrpA family. In terms of assembly, tetramer of two alpha and two beta chains.

It carries out the reaction (1S,2R)-1-C-(indol-3-yl)glycerol 3-phosphate + L-serine = D-glyceraldehyde 3-phosphate + L-tryptophan + H2O. The protein operates within amino-acid biosynthesis; L-tryptophan biosynthesis; L-tryptophan from chorismate: step 5/5. In terms of biological role, the alpha subunit is responsible for the aldol cleavage of indoleglycerol phosphate to indole and glyceraldehyde 3-phosphate. This chain is Tryptophan synthase alpha chain, found in Xanthomonas oryzae pv. oryzae (strain MAFF 311018).